Consider the following 149-residue polypeptide: Oligosaccharyltransferase complex subunit ostc (149 aa).

Topologically, residues 1–32 (METLFSLPFTVLECPNVKLKKPSWLHMPSAMT) are cytoplasmic. Residues 33 to 53 (VYAVVIVSYFLITGGIIYDVI) traverse the membrane as a helical segment. The Extracellular segment spans residues 54 to 83 (VEPPSVGSMTDEHGHQRPVAFLAYRVNGQY). Residues 84-104 (IMEGLASSFLFTMGGLGFIIL) form a helical membrane-spanning segment. Over 105–117 (DRSNAPNIPKLNR) the chain is Cytoplasmic. Residues 118-138 (FLLLFIGFVSVLLSFFMARVF) traverse the membrane as a helical segment. The Extracellular segment spans residues 139 to 149 (MRMKLPGYLMG).

Belongs to the OSTC family. Specific component of the STT3A-containing form of the oligosaccharyltransferase (OST) complex.

Its subcellular location is the membrane. It participates in protein modification; protein glycosylation. In terms of biological role, specific component of the STT3A-containing form of the oligosaccharyl transferase (OST) complex that catalyzes the initial transfer of a defined glycan (Glc(3)Man(9)GlcNAc(2) in eukaryotes) from the lipid carrier dolichol-pyrophosphate to an asparagine residue within an Asn-X-Ser/Thr consensus motif in nascent polypeptide chains, the first step in protein N-glycosylation. N-glycosylation occurs cotranslationally and the complex associates with the Sec61 complex at the channel-forming translocon complex that mediates protein translocation across the endoplasmic reticulum (ER). All subunits are required for a maximal enzyme activity. This is Oligosaccharyltransferase complex subunit ostc from Danio rerio (Zebrafish).